A 743-amino-acid chain; its full sequence is TSL-kinase interacting protein 1 (743 aa).

Residues Arg53–Asn104 enclose the SANT domain. Disordered stretches follow at residues Ser486–Trp523 and Ser626–Gly679. A compositionally biased stretch (basic and acidic residues) spans Val488 to Tyr499.

Interacts only with active kinase forms of TOUSLED. Interacts with SNL1. Phosphorylated in vitro by TOUSLED. Expressed in flowers, roots and leaves.

It localises to the nucleus. This Arabidopsis thaliana (Mouse-ear cress) protein is TSL-kinase interacting protein 1 (TKI1).